We begin with the raw amino-acid sequence, 117 residues long: Large ribosomal subunit protein uL18 (117 aa).

Belongs to the universal ribosomal protein uL18 family. As to quaternary structure, part of the 50S ribosomal subunit; part of the 5S rRNA/L5/L18/L25 subcomplex. Contacts the 5S and 23S rRNAs.

Its function is as follows. This is one of the proteins that bind and probably mediate the attachment of the 5S RNA into the large ribosomal subunit, where it forms part of the central protuberance. This is Large ribosomal subunit protein uL18 from Glaesserella parasuis serovar 5 (strain SH0165) (Haemophilus parasuis).